Reading from the N-terminus, the 265-residue chain is Phosphonates import ATP-binding protein PhnC (265 aa).

An ABC transporter domain is found at 3–247; the sequence is LRLKQAFLHH…MLDTLYANEQ (245 aa). ATP is bound at residue 36 to 43; sequence GPSGAGKS.

The protein belongs to the ABC transporter superfamily. Phosphonates importer (TC 3.A.1.9.1) family. In terms of assembly, the complex is composed of two ATP-binding proteins (PhnC), two transmembrane proteins (PhnE) and a solute-binding protein (PhnD).

The protein localises to the cell inner membrane. The catalysed reaction is phosphonate(out) + ATP + H2O = phosphonate(in) + ADP + phosphate + H(+). Part of the ABC transporter complex PhnCDE involved in phosphonates import. Responsible for energy coupling to the transport system. The protein is Phosphonates import ATP-binding protein PhnC of Pseudomonas fluorescens (strain Pf0-1).